The following is a 485-amino-acid chain: Adenosylhomocysteinase (485 aa).

Residues threonine 60, aspartate 146, and glutamate 208 each coordinate substrate. An NAD(+)-binding site is contributed by 209–211 (TTT). Substrate contacts are provided by lysine 238 and aspartate 242. Residues asparagine 243, 272–277 (GYGDVG), glutamate 295, asparagine 330, 351–353 (IGH), and asparagine 399 each bind NAD(+).

This sequence belongs to the adenosylhomocysteinase family. NAD(+) is required as a cofactor.

It is found in the cytoplasm. The catalysed reaction is S-adenosyl-L-homocysteine + H2O = L-homocysteine + adenosine. The protein operates within amino-acid biosynthesis; L-homocysteine biosynthesis; L-homocysteine from S-adenosyl-L-homocysteine: step 1/1. May play a key role in the regulation of the intracellular concentration of adenosylhomocysteine. This chain is Adenosylhomocysteinase, found in Streptomyces coelicolor (strain ATCC BAA-471 / A3(2) / M145).